Consider the following 186-residue polypeptide: Elongation factor P (186 aa).

Belongs to the elongation factor P family.

Its subcellular location is the cytoplasm. Its pathway is protein biosynthesis; polypeptide chain elongation. In terms of biological role, involved in peptide bond synthesis. Stimulates efficient translation and peptide-bond synthesis on native or reconstituted 70S ribosomes in vitro. Probably functions indirectly by altering the affinity of the ribosome for aminoacyl-tRNA, thus increasing their reactivity as acceptors for peptidyl transferase. This chain is Elongation factor P, found in Shewanella piezotolerans (strain WP3 / JCM 13877).